Consider the following 271-residue polypeptide: 3-methyl-2-oxobutanoate hydroxymethyltransferase (271 aa).

Mg(2+) is bound by residues aspartate 51 and aspartate 90. 3-methyl-2-oxobutanoate contacts are provided by residues 51–52 (DS), aspartate 90, and lysine 118. Residue glutamate 120 coordinates Mg(2+). Glutamate 186 (proton acceptor) is an active-site residue.

This sequence belongs to the PanB family. Homodecamer; pentamer of dimers. Mg(2+) serves as cofactor.

The protein localises to the cytoplasm. It catalyses the reaction 3-methyl-2-oxobutanoate + (6R)-5,10-methylene-5,6,7,8-tetrahydrofolate + H2O = 2-dehydropantoate + (6S)-5,6,7,8-tetrahydrofolate. Its pathway is cofactor biosynthesis; (R)-pantothenate biosynthesis; (R)-pantoate from 3-methyl-2-oxobutanoate: step 1/2. Its function is as follows. Catalyzes the reversible reaction in which hydroxymethyl group from 5,10-methylenetetrahydrofolate is transferred onto alpha-ketoisovalerate to form ketopantoate. The polypeptide is 3-methyl-2-oxobutanoate hydroxymethyltransferase (Xanthomonas euvesicatoria pv. vesicatoria (strain 85-10) (Xanthomonas campestris pv. vesicatoria)).